The chain runs to 128 residues: Sm-like protein LSM1B (128 aa).

The 76-residue stretch at 10–85 (YLSTSLASYL…VVLIGELDTE (76 aa)) folds into the Sm domain.

The protein belongs to the snRNP Sm proteins family. Component of the heptameric LSM1-LSM7 complex that forms a seven-membered ring structure with a donut shape. The LSM subunits are arranged in the order LSM1, LSM2, LSM3, LSM6, LSM5, LSM7 and LSM4. LSM1B subunit interacts only with its two neighboring subunits, LSM2 and LSM4. Expressed in roots, leaves, stems, flowers and siliques.

It localises to the cytoplasm. Its subcellular location is the P-body. In terms of biological role, component of the cytoplasmic LSM1-LSM7 complex which is involved in mRNA degradation by promoting decapping and leading to accurate 5'-3' mRNA decay. LSM1A and LSM1B are essential for the formation of the cytoplasmic LSM1-LSM7 complex which regulates developmental gene expression by the decapping of specific development-related transcripts. Required for P-body formation during heat stress. The chain is Sm-like protein LSM1B from Arabidopsis thaliana (Mouse-ear cress).